The following is a 289-amino-acid chain: Ubiquinone biosynthesis O-methyltransferase (289 aa).

An S-adenosyl-L-methionine-binding site is contributed by R36. In terms of domain architecture, RPE1 insert spans 50–98 (RHLSKLTYREELVGNMQHSTAAYALVREDASSRLTHKLPLEAEFEKMSN). Residues G109, D130, and L172 each coordinate S-adenosyl-L-methionine.

The protein belongs to the methyltransferase superfamily. UbiG/COQ3 family.

It catalyses the reaction a 3-demethylubiquinol + S-adenosyl-L-methionine = a ubiquinol + S-adenosyl-L-homocysteine + H(+). It carries out the reaction a 3-(all-trans-polyprenyl)benzene-1,2-diol + S-adenosyl-L-methionine = a 2-methoxy-6-(all-trans-polyprenyl)phenol + S-adenosyl-L-homocysteine + H(+). It functions in the pathway cofactor biosynthesis; ubiquinone biosynthesis. Its function is as follows. O-methyltransferase that catalyzes the 2 O-methylation steps in the ubiquinone biosynthetic pathway. In Rickettsia conorii (strain ATCC VR-613 / Malish 7), this protein is Ubiquinone biosynthesis O-methyltransferase.